The primary structure comprises 450 residues: Tryptophan dimethylallyltransferase 2 (450 aa).

L-tryptophan is bound by residues 80–81 (IL) and glutamate 89. Arginine 100, lysine 186, and tyrosine 188 together coordinate substrate. Residues tyrosine 190 and arginine 251 each contribute to the L-tryptophan site. The substrate site is built by arginine 264, lysine 266, tyrosine 268, glutamine 350, tyrosine 352, tyrosine 416, and tyrosine 420.

The protein belongs to the tryptophan dimethylallyltransferase family. As to quaternary structure, homodimer.

It carries out the reaction L-tryptophan + dimethylallyl diphosphate = 4-(3-methylbut-2-enyl)-L-tryptophan + diphosphate. The protein operates within alkaloid biosynthesis; ergot alkaloid biosynthesis. Its function is as follows. Catalyzes the first step of ergot alkaloid biosynthesis. Ergot alkaloids, which are produced by endophyte fungi, can enhance plant host fitness, but also cause livestock toxicosis to host plants. In Epichloe coenophiala (Tall fescue endophyte fungus), this protein is Tryptophan dimethylallyltransferase 2 (dmaW2).